A 678-amino-acid polypeptide reads, in one-letter code: Dol-P-Man:Man(7)GlcNAc(2)-PP-Dol alpha-1,6-mannosyltransferase (678 aa).

Helical transmembrane passes span methionine 1 to valine 21, phenylalanine 56 to leucine 76, phenylalanine 81 to serine 101, isoleucine 109 to methionine 129, threonine 133 to leucine 153, isoleucine 168 to leucine 188, valine 200 to tryptophan 220, phenylalanine 252 to alanine 272, proline 279 to leucine 299, phenylalanine 301 to tryptophan 321, and alanine 334 to isoleucine 354.

The protein belongs to the glycosyltransferase 22 family.

It is found in the endoplasmic reticulum membrane. The catalysed reaction is an alpha-D-Man-(1-&gt;2)-alpha-D-Man-(1-&gt;2)-alpha-D-Man-(1-&gt;3)-[alpha-D-Man-(1-&gt;2)-alpha-D-Man-(1-&gt;3)-alpha-D-Man-(1-&gt;6)]-beta-D-Man-(1-&gt;4)-beta-D-GlcNAc-(1-&gt;4)-alpha-D-GlcNAc-diphospho-di-trans,poly-cis-dolichol + a di-trans,poly-cis-dolichyl beta-D-mannosyl phosphate = an alpha-D-Man-(1-&gt;2)-alpha-D-Man-(1-&gt;2)-alpha-D-Man-(1-&gt;3)-[alpha-D-Man-(1-&gt;2)-alpha-D-Man-(1-&gt;3)-[alpha-D-Man-(1-&gt;6)]-alpha-D-Man-(1-&gt;6)]-beta-D-Man-(1-&gt;4)-beta-D-GlcNAc-(1-&gt;4)-alpha-D-GlcNAc-diphospho-di-trans,poly-cis-dolichol + a di-trans,poly-cis-dolichyl phosphate + H(+). Its pathway is protein modification; protein glycosylation. Mannosyltransferase that operates in the biosynthetic pathway of dolichol-linked oligosaccharides, the glycan precursors employed in protein asparagine (N)-glycosylation. The assembly of dolichol-linked oligosaccharides begins on the cytosolic side of the endoplasmic reticulum membrane and finishes in its lumen. The sequential addition of sugars to dolichol pyrophosphate produces dolichol-linked oligosaccharides containing fourteen sugars, including two GlcNAcs, nine mannoses and three glucoses. Once assembled, the oligosaccharide is transferred from the lipid to nascent proteins by oligosaccharyltransferases. In the lumen of the endoplasmic reticulum, adds the eighth mannose residue in an alpha-1,6 linkage onto Man(7)GlcNAc(2)-PP-dolichol to produce Man(8)GlcNAc(2)-PP-dolichol. This Drosophila melanogaster (Fruit fly) protein is Dol-P-Man:Man(7)GlcNAc(2)-PP-Dol alpha-1,6-mannosyltransferase.